The following is a 254-amino-acid chain: Imidazole glycerol phosphate synthase subunit HisF (254 aa).

Active-site residues include Asp13 and Asp132.

This sequence belongs to the HisA/HisF family. As to quaternary structure, heterodimer of HisH and HisF.

Its subcellular location is the cytoplasm. The catalysed reaction is 5-[(5-phospho-1-deoxy-D-ribulos-1-ylimino)methylamino]-1-(5-phospho-beta-D-ribosyl)imidazole-4-carboxamide + L-glutamine = D-erythro-1-(imidazol-4-yl)glycerol 3-phosphate + 5-amino-1-(5-phospho-beta-D-ribosyl)imidazole-4-carboxamide + L-glutamate + H(+). The protein operates within amino-acid biosynthesis; L-histidine biosynthesis; L-histidine from 5-phospho-alpha-D-ribose 1-diphosphate: step 5/9. Functionally, IGPS catalyzes the conversion of PRFAR and glutamine to IGP, AICAR and glutamate. The HisF subunit catalyzes the cyclization activity that produces IGP and AICAR from PRFAR using the ammonia provided by the HisH subunit. The protein is Imidazole glycerol phosphate synthase subunit HisF of Nautilia profundicola (strain ATCC BAA-1463 / DSM 18972 / AmH).